The following is a 498-amino-acid chain: GTPase Der (498 aa).

2 EngA-type G domains span residues 3–167 and 210–383; these read PVVA…FDDL and IKLA…KSAT. Residues 9-16, 57-61, 119-122, 216-223, 263-267, and 328-331 contribute to the GTP site; these read GRPNVGKS, DTGGI, NKID, DTAGV, and NKWD. The KH-like domain occupies 384–468; the sequence is TRVGTSVLTR…PIRINFQNSD (85 aa).

This sequence belongs to the TRAFAC class TrmE-Era-EngA-EngB-Septin-like GTPase superfamily. EngA (Der) GTPase family. As to quaternary structure, associates with the 50S ribosomal subunit.

Functionally, GTPase that plays an essential role in the late steps of ribosome biogenesis. This chain is GTPase Der, found in Vibrio campbellii (strain ATCC BAA-1116).